We begin with the raw amino-acid sequence, 149 residues long: D-aminoacyl-tRNA deacylase (149 aa).

Residues 137 to 138 carry the Gly-cisPro motif, important for rejection of L-amino acids motif; sequence GP.

The protein belongs to the DTD family. Homodimer.

It is found in the cytoplasm. The enzyme catalyses glycyl-tRNA(Ala) + H2O = tRNA(Ala) + glycine + H(+). The catalysed reaction is a D-aminoacyl-tRNA + H2O = a tRNA + a D-alpha-amino acid + H(+). An aminoacyl-tRNA editing enzyme that deacylates mischarged D-aminoacyl-tRNAs. Also deacylates mischarged glycyl-tRNA(Ala), protecting cells against glycine mischarging by AlaRS. Acts via tRNA-based rather than protein-based catalysis; rejects L-amino acids rather than detecting D-amino acids in the active site. By recycling D-aminoacyl-tRNA to D-amino acids and free tRNA molecules, this enzyme counteracts the toxicity associated with the formation of D-aminoacyl-tRNA entities in vivo and helps enforce protein L-homochirality. The sequence is that of D-aminoacyl-tRNA deacylase from Clostridium botulinum (strain Kyoto / Type A2).